Reading from the N-terminus, the 208-residue chain is MIVVGIDEAGRGSLIGPMIVAGVAIKNDRLKFLKNIGVKDSKQLTRNRREKLFDIICSYSEGFTIVKVSPEEIDSENLNELTYKAMIKIIYSLVEFKPIRISIDKVGNTKVVEQEIIKLGMEPNIVTNADVYFVEASAASIIAKVIRDNIIDTLKSKYGDFGSGYPSDPKTVNWVKNVYKEYLTPPPIIRRSWKILQEIAPNYYIRKW.

The region spanning 1–205 (MIVVGIDEAG…LQEIAPNYYI (205 aa)) is the RNase H type-2 domain. Residues Asp7, Glu8, and Asp104 each coordinate a divalent metal cation.

It belongs to the RNase HII family. Mn(2+) is required as a cofactor. The cofactor is Mg(2+).

The protein localises to the cytoplasm. It carries out the reaction Endonucleolytic cleavage to 5'-phosphomonoester.. Functionally, endonuclease that specifically degrades the RNA of RNA-DNA hybrids. This chain is Ribonuclease HII, found in Sulfurisphaera tokodaii (strain DSM 16993 / JCM 10545 / NBRC 100140 / 7) (Sulfolobus tokodaii).